The primary structure comprises 95 residues: Aspartyl/glutamyl-tRNA(Asn/Gln) amidotransferase subunit C (95 aa).

This sequence belongs to the GatC family. Heterotrimer of A, B and C subunits.

It catalyses the reaction L-glutamyl-tRNA(Gln) + L-glutamine + ATP + H2O = L-glutaminyl-tRNA(Gln) + L-glutamate + ADP + phosphate + H(+). It carries out the reaction L-aspartyl-tRNA(Asn) + L-glutamine + ATP + H2O = L-asparaginyl-tRNA(Asn) + L-glutamate + ADP + phosphate + 2 H(+). Functionally, allows the formation of correctly charged Asn-tRNA(Asn) or Gln-tRNA(Gln) through the transamidation of misacylated Asp-tRNA(Asn) or Glu-tRNA(Gln) in organisms which lack either or both of asparaginyl-tRNA or glutaminyl-tRNA synthetases. The reaction takes place in the presence of glutamine and ATP through an activated phospho-Asp-tRNA(Asn) or phospho-Glu-tRNA(Gln). This is Aspartyl/glutamyl-tRNA(Asn/Gln) amidotransferase subunit C from Desulfosudis oleivorans (strain DSM 6200 / JCM 39069 / Hxd3) (Desulfococcus oleovorans).